Reading from the N-terminus, the 225-residue chain is F-box protein SKIP27 (225 aa).

The F-box domain maps to 121–169 (KSRLECLPQDLLIRVICGVDHEDLKSLKLVSKSIREASLVAKTLHFAYT).

In terms of assembly, part of a SCF (ASK-cullin-F-box) protein ligase complex. Interacts with SKP1A/ASK1 and SPK1B/ASK2.

It localises to the nucleus. It functions in the pathway protein modification; protein ubiquitination. In terms of biological role, component of SCF(ASK-cullin-F-box) E3 ubiquitin ligase complexes, which may mediate the ubiquitination and subsequent proteasomal degradation of target proteins. The sequence is that of F-box protein SKIP27 (SKIP27) from Arabidopsis thaliana (Mouse-ear cress).